The following is a 490-amino-acid chain: Aspartyl/glutamyl-tRNA(Asn/Gln) amidotransferase subunit B (490 aa).

The protein belongs to the GatB/GatE family. GatB subfamily. Heterotrimer of A, B and C subunits.

The enzyme catalyses L-glutamyl-tRNA(Gln) + L-glutamine + ATP + H2O = L-glutaminyl-tRNA(Gln) + L-glutamate + ADP + phosphate + H(+). It carries out the reaction L-aspartyl-tRNA(Asn) + L-glutamine + ATP + H2O = L-asparaginyl-tRNA(Asn) + L-glutamate + ADP + phosphate + 2 H(+). In terms of biological role, allows the formation of correctly charged Asn-tRNA(Asn) or Gln-tRNA(Gln) through the transamidation of misacylated Asp-tRNA(Asn) or Glu-tRNA(Gln) in organisms which lack either or both of asparaginyl-tRNA or glutaminyl-tRNA synthetases. The reaction takes place in the presence of glutamine and ATP through an activated phospho-Asp-tRNA(Asn) or phospho-Glu-tRNA(Gln). The chain is Aspartyl/glutamyl-tRNA(Asn/Gln) amidotransferase subunit B from Methylorubrum populi (strain ATCC BAA-705 / NCIMB 13946 / BJ001) (Methylobacterium populi).